Here is a 739-residue protein sequence, read N- to C-terminus: Catalase-peroxidase (739 aa).

Positions methionine 1–alanine 23 are cleaved as a signal peptide. Positions tryptophan 100–tyrosine 221 form a cross-link, tryptophyl-tyrosyl-methioninium (Trp-Tyr) (with M-247). Histidine 101 functions as the Proton acceptor in the catalytic mechanism. The tryptophyl-tyrosyl-methioninium (Tyr-Met) (with W-100) cross-link spans tyrosine 221–methionine 247. Residue histidine 262 participates in heme b binding.

This sequence belongs to the peroxidase family. Peroxidase/catalase subfamily. Homodimer or homotetramer. The cofactor is heme b. Formation of the three residue Trp-Tyr-Met cross-link is important for the catalase, but not the peroxidase activity of the enzyme.

The catalysed reaction is H2O2 + AH2 = A + 2 H2O. It carries out the reaction 2 H2O2 = O2 + 2 H2O. Functionally, bifunctional enzyme with both catalase and broad-spectrum peroxidase activity. The protein is Catalase-peroxidase of Francisella philomiragia subsp. philomiragia (strain ATCC 25017 / CCUG 19701 / FSC 153 / O#319-036).